A 639-amino-acid polypeptide reads, in one-letter code: Mediator of RNA polymerase II transcription subunit 17 (639 aa).

The segment covering 32 to 43 (ASATVTTNGTTA) has biased composition (polar residues). 2 disordered regions span residues 32–68 (ASAT…EEHS) and 130–159 (MGDA…NNDS). Over residues 48–57 (DSGSQQSVSS) the composition is skewed to low complexity. The segment covering 58–68 (APIQQNSEEHS) has biased composition (polar residues). Residues 245–271 (WKLRSLEDSKALLKENYAKLQKSLEVE) adopt a coiled-coil conformation.

The protein belongs to the Mediator complex subunit 17 family. As to quaternary structure, component of the Mediator complex.

It is found in the nucleus. In terms of biological role, component of the Mediator complex, a coactivator involved in the regulated transcription of nearly all RNA polymerase II-dependent genes. Mediator functions as a bridge to convey information from gene-specific regulatory proteins to the basal RNA polymerase II transcription machinery. Mediator is recruited to promoters by direct interactions with regulatory proteins and serves as a scaffold for the assembly of a functional preinitiation complex with RNA polymerase II and the general transcription factors. This Eremothecium gossypii (strain ATCC 10895 / CBS 109.51 / FGSC 9923 / NRRL Y-1056) (Yeast) protein is Mediator of RNA polymerase II transcription subunit 17 (SRB4).